Here is a 100-residue protein sequence, read N- to C-terminus: UPF0235 protein TC_0667 (100 aa).

This sequence belongs to the UPF0235 family.

This Chlamydia muridarum (strain MoPn / Nigg) protein is UPF0235 protein TC_0667.